The sequence spans 119 residues: MPRVKRGVTAKARHKKILDQAKGYYGARSRTYRVAKQAVIKAGQYAYRDRRQKKRQFRALWITRINAQARECGLSYSRLIDGLKKASIELDRKILADMAVHDKVAFAAIAEQAKAALAG.

This sequence belongs to the bacterial ribosomal protein bL20 family.

Binds directly to 23S ribosomal RNA and is necessary for the in vitro assembly process of the 50S ribosomal subunit. It is not involved in the protein synthesizing functions of that subunit. The polypeptide is Large ribosomal subunit protein bL20 (Legionella pneumophila (strain Paris)).